A 1180-amino-acid chain; its full sequence is Tudor domain-containing protein 1 (1180 aa).

Disordered regions lie at residues 1–66 (MSVK…KKNN) and 79–138 (SQED…RPAK). Basic and acidic residues predominate over residues 27 to 41 (NFEKNENKLPPHESL). Composition is skewed to polar residues over residues 79 to 91 (SQEDNSVSSNPNG) and 110 to 122 (NSVSPPSAESNSP). The Zn(2+) site is built by Cys-170, Cys-173, Cys-181, Cys-184, Cys-190, Cys-194, His-202, and Cys-206. The segment at 170 to 206 (CHRCGLFGSLRCSQCKQTYYCSTACQRRDWSAHSIVC) adopts an MYND-type zinc-finger fold. In terms of domain architecture, Tudor 1 spans 312-372 (IPVKGEVCIA…YHLNRNIDLF (61 aa)). A disordered region spans residues 450–469 (SGQDSKKENADQSDPEDVGK). Tudor domains follow at residues 541–600 (YPAI…LLEL), 762–821 (KAEI…FLNL), and 990–1048 (RPRI…HLAL).

Belongs to the TDRD1 family. As to quaternary structure, found in a mRNP complex, at least composed of TDRD1, TDRD6, TDRD7 and DDX4. Interacts with MAEL. Interacts with PIWIL1, PIWIL2 and PIWIL4 (when methylated on arginine residues). Interacts with TDRD12. Testis and ovary specific. Also expressed in several cancers.

The protein localises to the cytoplasm. Functionally, plays a central role during spermatogenesis by participating in the repression transposable elements and preventing their mobilization, which is essential for the germline integrity. Acts via the piRNA metabolic process, which mediates the repression of transposable elements during meiosis by forming complexes composed of piRNAs and Piwi proteins and governs the methylation and subsequent repression of transposons. Required for the localization of Piwi proteins to the meiotic nuage. Involved in the piRNA metabolic process by ensuring the entry of correct transcripts into the normal piRNA pool and limiting the entry of cellular transcripts into the piRNA pathway. May act by allowing the recruitment of piRNA biogenesis or loading factors that ensure the correct entry of transcripts and piRNAs into Piwi proteins. The protein is Tudor domain-containing protein 1 (TDRD1) of Homo sapiens (Human).